Consider the following 132-residue polypeptide: Iron-sulfur cluster assembly 1 homolog, mitochondrial (132 aa).

The transit peptide at Met-1–Ala-15 directs the protein to the mitochondrion. Fe cation is bound by residues Cys-60, Cys-124, and Cys-126.

The protein belongs to the HesB/IscA family. Homooligomer, forming a rod-shaped structure 24 nm in length that may arise through a double-helical assembly of subunits. Interacts with CRY4; CRY4 seems to be associated with the outside of the rod-shaped homooligomer. Does not interact with CRY1 or CRY2. As to expression, detected in retina, especially in the retinal ganglion layer, the inner nuclear layer and the outer nuclear layer. Detected in retina visual pigment cells (at protein level).

It localises to the mitochondrion. Its function is as follows. Involved in the maturation of mitochondrial 4Fe-4S proteins functioning late in the iron-sulfur cluster assembly pathway. Probably involved in the binding of an intermediate of Fe/S cluster assembly. Component of a putative magnetoreceptor complex formed by ISCA1 and CRY4, a member of the cryptochrome family that are known to be required for light-dependent magnetosensitivity in various orgnisms. The rod-like assembly may facilitate the perception of the Earth's weak magnetic field. Both ISCA1 and the complex with CRY4 have magnetic properties and are attracted to iron beads. When exposed to a magnetic field of 1 mT (superior to the natural magnetic field), over 50% of the rod-like complexes align more or less in parallel with the magnetic field at room temperature. The polypeptide is Iron-sulfur cluster assembly 1 homolog, mitochondrial (ISCA1) (Columba livia (Rock dove)).